The chain runs to 95 residues: UPF0235 protein AnaeK_1146 (95 aa).

Belongs to the UPF0235 family.

In Anaeromyxobacter sp. (strain K), this protein is UPF0235 protein AnaeK_1146.